A 194-amino-acid chain; its full sequence is MTENSTSAPAAKPKRAKASKKSTDHPKYSDMIVAAIQAEKNRAGSSRQSIQKYIKSHYKVGENADSQIKLSIKRLVTTGVLKQTKGVGASGSFRLAKGDEPKRSVAFKKTKKEVKKVATPKKAAKPKKAASKAPSKKPKATPVKKAKKKPAATPKKAKKPKVVKVKPVKASKPKKAKTVKPKAKSSAKRASKKK.

An N-acetylmethionine modification is found at Met-1. The span at 1–11 (MTENSTSAPAA) shows a compositional bias: low complexity. A disordered region spans residues 1 to 28 (MTENSTSAPAAKPKRAKASKKSTDHPKY). At Thr-2 the chain carries N-acetylthreonine; in Histone H1.0, N-terminally processed. Residues 24–97 (DHPKYSDMIV…GASGSFRLAK (74 aa)) enclose the H15 domain. Position 42 is a citrulline (Arg-42). A disordered region spans residues 86-194 (GVGASGSFRL…SSAKRASKKK (109 aa)). Ser-104 is modified (ADP-ribosylserine). Residues 105–194 (VAFKKTKKEV…SSAKRASKKK (90 aa)) show a composition bias toward basic residues.

This sequence belongs to the histone H1/H5 family. ADP-ribosylated on Ser-104 in response to DNA damage.

It is found in the nucleus. It localises to the chromosome. Histones H1 are necessary for the condensation of nucleosome chains into higher-order structures. The histones H1.0 are found in cells that are in terminal stages of differentiation or that have low rates of cell division. This is Histone H1.0 (H1-0) from Mus musculus (Mouse).